The chain runs to 34 residues: Photosystem II reaction center protein M (34 aa).

Residues 5-25 (ILAFIATALFILIPTAFLLII) traverse the membrane as a helical segment.

Belongs to the PsbM family. PSII is composed of 1 copy each of membrane proteins PsbA, PsbB, PsbC, PsbD, PsbE, PsbF, PsbH, PsbI, PsbJ, PsbK, PsbL, PsbM, PsbT, PsbX, PsbY, PsbZ, Psb30/Ycf12, at least 3 peripheral proteins of the oxygen-evolving complex and a large number of cofactors. It forms dimeric complexes.

It localises to the plastid. Its subcellular location is the chloroplast thylakoid membrane. Functionally, one of the components of the core complex of photosystem II (PSII). PSII is a light-driven water:plastoquinone oxidoreductase that uses light energy to abstract electrons from H(2)O, generating O(2) and a proton gradient subsequently used for ATP formation. It consists of a core antenna complex that captures photons, and an electron transfer chain that converts photonic excitation into a charge separation. This subunit is found at the monomer-monomer interface. The sequence is that of Photosystem II reaction center protein M from Agrostis stolonifera (Creeping bentgrass).